The chain runs to 1396 residues: DNA-directed RNA polymerase subunit beta' (1396 aa).

The Zn(2+) site is built by C72, C74, C87, and C90. Mg(2+) contacts are provided by D463, D465, and D467. Zn(2+) is bound by residues C814, C889, C896, and C899.

This sequence belongs to the RNA polymerase beta' chain family. As to quaternary structure, the RNAP catalytic core consists of 2 alpha, 1 beta, 1 beta' and 1 omega subunit. When a sigma factor is associated with the core the holoenzyme is formed, which can initiate transcription. The cofactor is Mg(2+). Zn(2+) serves as cofactor.

The catalysed reaction is RNA(n) + a ribonucleoside 5'-triphosphate = RNA(n+1) + diphosphate. Functionally, DNA-dependent RNA polymerase catalyzes the transcription of DNA into RNA using the four ribonucleoside triphosphates as substrates. The sequence is that of DNA-directed RNA polymerase subunit beta' from Chlamydia trachomatis serovar L2b (strain UCH-1/proctitis).